Consider the following 343-residue polypeptide: Tetraacyldisaccharide 4'-kinase (343 aa).

53–60 lines the ATP pocket; the sequence is TCGGAGKT.

This sequence belongs to the LpxK family.

It carries out the reaction a lipid A disaccharide + ATP = a lipid IVA + ADP + H(+). The protein operates within glycolipid biosynthesis; lipid IV(A) biosynthesis; lipid IV(A) from (3R)-3-hydroxytetradecanoyl-[acyl-carrier-protein] and UDP-N-acetyl-alpha-D-glucosamine: step 6/6. In terms of biological role, transfers the gamma-phosphate of ATP to the 4'-position of a tetraacyldisaccharide 1-phosphate intermediate (termed DS-1-P) to form tetraacyldisaccharide 1,4'-bis-phosphate (lipid IVA). In Bartonella quintana (strain Toulouse) (Rochalimaea quintana), this protein is Tetraacyldisaccharide 4'-kinase.